A 270-amino-acid polypeptide reads, in one-letter code: tRNA pseudouridine synthase A (270 aa).

Asp60 (nucleophile) is an active-site residue. Substrate is bound at residue Tyr118.

The protein belongs to the tRNA pseudouridine synthase TruA family. As to quaternary structure, homodimer.

It catalyses the reaction uridine(38/39/40) in tRNA = pseudouridine(38/39/40) in tRNA. In terms of biological role, formation of pseudouridine at positions 38, 39 and 40 in the anticodon stem and loop of transfer RNAs. This Salmonella arizonae (strain ATCC BAA-731 / CDC346-86 / RSK2980) protein is tRNA pseudouridine synthase A.